We begin with the raw amino-acid sequence, 144 residues long: Large ribosomal subunit protein uL13 (144 aa).

The protein belongs to the universal ribosomal protein uL13 family. In terms of assembly, part of the 50S ribosomal subunit.

Functionally, this protein is one of the early assembly proteins of the 50S ribosomal subunit, although it is not seen to bind rRNA by itself. It is important during the early stages of 50S assembly. The protein is Large ribosomal subunit protein uL13 of Nitratidesulfovibrio vulgaris (strain DSM 19637 / Miyazaki F) (Desulfovibrio vulgaris).